A 224-amino-acid chain; its full sequence is UPF0758 protein VS_0182 (224 aa).

Residues 1 to 21 (MPISKMPVESMPREKLLSRGP) form a disordered region. Residues 102–224 (ALTSPSHTKL…VISFAERGWI (123 aa)) enclose the MPN domain. 3 residues coordinate Zn(2+): histidine 173, histidine 175, and aspartate 186. A JAMM motif motif is present at residues 173–186 (HNHPSGVAEPSQAD).

Belongs to the UPF0758 family.

This chain is UPF0758 protein VS_0182, found in Vibrio atlanticus (strain LGP32) (Vibrio splendidus (strain Mel32)).